Here is a 369-residue protein sequence, read N- to C-terminus: Proton-coupled zinc antiporter SLC30A8 (369 aa).

Over 1–79 (MEFLERTYLV…AKWKLCSASA (79 aa)) the chain is Cytoplasmic. Positions 31 to 52 (PVNKDQCPRERPEELESGGMYH) are disordered. Residues 32–44 (VNKDQCPRERPEE) show a composition bias toward basic and acidic residues. Zn(2+)-binding residues include His-52, Cys-53, and His-54. The short motif at 52 to 54 (HCH) is the HCH Motif; seals regulatory zinc-binding pocket element. A helical transmembrane segment spans residues 80–100 (ICFIFMIAEVVGGHIAGSLAV). The Lumenal, vesicle segment spans residues 101 to 103 (VTD). A helical membrane pass occupies residues 104-124 (AAHLLIDLTSFLLSLFSLWLS). Zn(2+)-binding residues include His-106, Asp-110, and His-137. Topologically, residues 125–140 (SKPPSKRLTFGWHRAE) are cytoplasmic. Residues 141–161 (ILGALLSILCIWVVTGVLVYL) form a helical membrane-spanning segment. At 162 to 175 (ACERLLYPDYQIQA) the chain is on the lumenal, vesicle side. The helical transmembrane segment at 176 to 196 (TVMIIVSSCAVAANIVLTVVL) threads the bilayer. Residues 197 to 217 (HQRCLGHNHKEVQANASVRAA) lie on the Cytoplasmic side of the membrane. The chain crosses the membrane as a helical span at residues 218–238 (FVHALGDLFQSISVLISALII). His-220 and Asp-224 together coordinate Zn(2+). Topologically, residues 239 to 245 (YFKPEYK) are lumenal, vesicle. Residues 246–266 (IADPICTFIFSILVLASTITI) form a helical membrane-spanning segment. The Cytoplasmic portion of the chain corresponds to 267–369 (LKDFSILLME…DCLFCEDPCD (103 aa)). Zn(2+) contacts are provided by His-301, His-318, His-345, Glu-352, Cys-361, and Cys-364.

Belongs to the cation diffusion facilitator (CDF) transporter (TC 2.A.4) family. SLC30A subfamily. As to quaternary structure, homodimer. As to expression, in the endocrine pancreas, expressed in insulin-producing beta cells. Expressed at relatively high levels in subcutaneous fat tissue from lean persons; much lower levels in visceral fat, whether from lean or obese individuals, and in subcutaneous fat tissue from obese individuals. Expressed in peripheral blood mononuclear cells, including T-cells and B-cells, with great variation among individuals ranging from negative to strongly positive.

It is found in the cytoplasmic vesicle. The protein resides in the secretory vesicle membrane. Its subcellular location is the cell membrane. The catalysed reaction is Zn(2+)(in) + 2 H(+)(out) = Zn(2+)(out) + 2 H(+)(in). Its function is as follows. Proton-coupled zinc ion antiporter mediating the entry of zinc into the lumen of pancreatic beta cell secretory granules, thereby regulating insulin secretion. This Homo sapiens (Human) protein is Proton-coupled zinc antiporter SLC30A8.